The following is a 376-amino-acid chain: Protein RecA (376 aa).

66–73 (GPESSGKT) is an ATP binding site. Residues 329–376 (VGVKPEDLTAEPGADAAGAAADAEAPAKSVPAPAAKSAKGSKAAAAKS) form a disordered region. A compositionally biased stretch (low complexity) spans 338-376 (AEPGADAAGAAADAEAPAKSVPAPAAKSAKGSKAAAAKS).

The protein belongs to the RecA family.

It localises to the cytoplasm. Its function is as follows. Can catalyze the hydrolysis of ATP in the presence of single-stranded DNA, the ATP-dependent uptake of single-stranded DNA by duplex DNA, and the ATP-dependent hybridization of homologous single-stranded DNAs. It interacts with LexA causing its activation and leading to its autocatalytic cleavage. This Streptomyces rimosus protein is Protein RecA.